We begin with the raw amino-acid sequence, 133 residues long: Ribosome-binding factor A (133 aa).

This sequence belongs to the RbfA family. In terms of assembly, monomer. Binds 30S ribosomal subunits, but not 50S ribosomal subunits or 70S ribosomes.

Its subcellular location is the cytoplasm. Its function is as follows. One of several proteins that assist in the late maturation steps of the functional core of the 30S ribosomal subunit. Associates with free 30S ribosomal subunits (but not with 30S subunits that are part of 70S ribosomes or polysomes). Required for efficient processing of 16S rRNA. May interact with the 5'-terminal helix region of 16S rRNA. The protein is Ribosome-binding factor A of Bordetella parapertussis (strain 12822 / ATCC BAA-587 / NCTC 13253).